The sequence spans 140 residues: Heavy metal-associated isoprenylated plant protein 31 (140 aa).

The HMA domain maps to 3-67; that stretch reads MTVEIRVPNL…AVRRAGKAAE (65 aa). The a metal cation site is built by C14 and C17. C137 is subject to Cysteine methyl ester. The S-farnesyl cysteine moiety is linked to residue C137. Residues 138-140 constitute a propeptide, removed in mature form; that stretch reads TIM.

The protein belongs to the HIPP family.

In terms of biological role, heavy-metal-binding protein. The protein is Heavy metal-associated isoprenylated plant protein 31 of Arabidopsis thaliana (Mouse-ear cress).